We begin with the raw amino-acid sequence, 479 residues long: MKALNKETAAKTQRPERIIQFGEGNFLRAFVDWIIYNMNEKTDFNSSVVVVQPIEKGMVDMLNAQDCLYHVNLQGLDKGQVVNSLTKIDVISRALNPYSQNDEFMKLAEQPEMRFVISNTTEAGIAFDPACKLDDAPASSYPGKLTQLLYHRYKTFNGDKSKGLIIFPCELIFLNGHKLKETIYQYIDLWNLGEDFKQWFEEACGVYATLVDRIVPGFPRKDIAAIKEKLQYDDNLVVQAEIFHLWVIEAPQEVAKEFPADKAGLNVLFVPSEAPYHERKVTLLNGPHTVLSPVAYLSGINIVREACEHEVVGKYIHKVMFDELMETLNLPKEELKKFAEDVLERFNNPFVDHQVTSIMLNSFPKYETRDLPGLKVYLERKGELPKGLVLGLAAIITYYKGGVRADGAEIVPNDAPEIMNLLKELWATGCTQKVAEGVLAAESIWGENLNNIPGLTAAVKADLDSIQEKGMLETVKGIL.

18-29 (IIQFGEGNFLRA) is a binding site for NAD(+).

The protein belongs to the mannitol dehydrogenase family. UxaB subfamily.

The catalysed reaction is D-altronate + NAD(+) = keto-D-tagaturonate + NADH + H(+). Its pathway is carbohydrate metabolism; pentose and glucuronate interconversion. This chain is Altronate oxidoreductase, found in Phocaeicola vulgatus (strain ATCC 8482 / DSM 1447 / JCM 5826 / CCUG 4940 / NBRC 14291 / NCTC 11154) (Bacteroides vulgatus).